The chain runs to 244 residues: Glutathione S-transferase theta-2 (244 aa).

The 81-residue stretch at 2–82 folds into the GST N-terminal domain; sequence GLELYLDLLS…YLSSKYQVAD (81 aa). Glutathione contacts are provided by residues 40 to 41, 53 to 54, 66 to 67, and 104 to 107; these read HM, KV, ES, and DNIR. The GST C-terminal domain maps to 88-230; the sequence is DLQARAQVHE…AKKMLPVPPP (143 aa).

This sequence belongs to the GST superfamily. Theta family. As to quaternary structure, homodimer. As to expression, in liver, highest expression found in central vein limiting plate hepatocytes. Also expressed in interlobular bile duct epithelial cells. In lung, expressed in club cells and ciliated cells of the bronchiolar epithelium and in type II alveolar cells of the lung parenchyma.

It is found in the cytoplasm. It localises to the cytosol. Its subcellular location is the nucleus. The catalysed reaction is RX + glutathione = an S-substituted glutathione + a halide anion + H(+). Its function is as follows. Conjugation of reduced glutathione to a wide number of exogenous and endogenous hydrophobic electrophiles. This Mus musculus (Mouse) protein is Glutathione S-transferase theta-2.